Consider the following 666-residue polypeptide: NAD(P)H-quinone oxidoreductase subunit 5, organellar chromatophore 1 (666 aa).

A run of 15 helical transmembrane segments spans residues leucine 8–isoleucine 28, alanine 41–alanine 61, valine 90–valine 110, serine 121–leucine 141, leucine 145–phenylalanine 165, phenylalanine 190–alanine 210, glycine 220–alanine 240, threonine 259–alanine 279, isoleucine 293–glutamine 313, leucine 328–isoleucine 348, glycine 396–tryptophan 416, serine 428–phenylalanine 448, threonine 497–tryptophan 517, phenylalanine 542–isoleucine 562, and glycine 643–phenylalanine 663.

It belongs to the complex I subunit 5 family. In terms of assembly, NDH is composed of at least 16 different subunits, 5 of which are encoded in the nucleus.

The protein resides in the plastid. Its subcellular location is the organellar chromatophore thylakoid membrane. The enzyme catalyses a plastoquinone + NADH + (n+1) H(+)(in) = a plastoquinol + NAD(+) + n H(+)(out). The catalysed reaction is a plastoquinone + NADPH + (n+1) H(+)(in) = a plastoquinol + NADP(+) + n H(+)(out). In terms of biological role, NDH shuttles electrons from NAD(P)H:plastoquinone, via FMN and iron-sulfur (Fe-S) centers, to quinones in the photosynthetic chain and possibly in a chloroplast respiratory chain. The immediate electron acceptor for the enzyme in this species is believed to be plastoquinone. Couples the redox reaction to proton translocation, and thus conserves the redox energy in a proton gradient. The chain is NAD(P)H-quinone oxidoreductase subunit 5, organellar chromatophore 1 (ndhF1) from Paulinella chromatophora.